The following is a 393-amino-acid chain: UDP-N-acetylglucosamine--N-acetylmuramyl-(pentapeptide) pyrophosphoryl-undecaprenol N-acetylglucosamine transferase (393 aa).

UDP-N-acetyl-alpha-D-glucosamine is bound by residues 15–17, Asn-129, Arg-171, Ser-211, and Gln-322; that span reads TAG.

It belongs to the glycosyltransferase 28 family. MurG subfamily.

Its subcellular location is the cell membrane. It catalyses the reaction di-trans,octa-cis-undecaprenyl diphospho-N-acetyl-alpha-D-muramoyl-L-alanyl-D-glutamyl-meso-2,6-diaminopimeloyl-D-alanyl-D-alanine + UDP-N-acetyl-alpha-D-glucosamine = di-trans,octa-cis-undecaprenyl diphospho-[N-acetyl-alpha-D-glucosaminyl-(1-&gt;4)]-N-acetyl-alpha-D-muramoyl-L-alanyl-D-glutamyl-meso-2,6-diaminopimeloyl-D-alanyl-D-alanine + UDP + H(+). It participates in cell wall biogenesis; peptidoglycan biosynthesis. In terms of biological role, cell wall formation. Catalyzes the transfer of a GlcNAc subunit on undecaprenyl-pyrophosphoryl-MurNAc-pentapeptide (lipid intermediate I) to form undecaprenyl-pyrophosphoryl-MurNAc-(pentapeptide)GlcNAc (lipid intermediate II). This Bifidobacterium longum (strain DJO10A) protein is UDP-N-acetylglucosamine--N-acetylmuramyl-(pentapeptide) pyrophosphoryl-undecaprenol N-acetylglucosamine transferase.